Reading from the N-terminus, the 379-residue chain is Queuine tRNA-ribosyltransferase (379 aa).

The active-site Proton acceptor is the Asp-89. Substrate contacts are provided by residues 89 to 93 (DSGGF), Asp-143, Gln-187, and Gly-214. The RNA binding stretch occupies residues 245–251 (GVGKPED). Asp-264 serves as the catalytic Nucleophile. The RNA binding; important for wobble base 34 recognition stretch occupies residues 269–273 (TRNAR). Zn(2+) is bound by residues Cys-302, Cys-304, Cys-307, and His-333.

Belongs to the queuine tRNA-ribosyltransferase family. Homodimer. Within each dimer, one monomer is responsible for RNA recognition and catalysis, while the other monomer binds to the replacement base PreQ1. Requires Zn(2+) as cofactor.

It catalyses the reaction 7-aminomethyl-7-carbaguanine + guanosine(34) in tRNA = 7-aminomethyl-7-carbaguanosine(34) in tRNA + guanine. The protein operates within tRNA modification; tRNA-queuosine biosynthesis. Catalyzes the base-exchange of a guanine (G) residue with the queuine precursor 7-aminomethyl-7-deazaguanine (PreQ1) at position 34 (anticodon wobble position) in tRNAs with GU(N) anticodons (tRNA-Asp, -Asn, -His and -Tyr). Catalysis occurs through a double-displacement mechanism. The nucleophile active site attacks the C1' of nucleotide 34 to detach the guanine base from the RNA, forming a covalent enzyme-RNA intermediate. The proton acceptor active site deprotonates the incoming PreQ1, allowing a nucleophilic attack on the C1' of the ribose to form the product. After dissociation, two additional enzymatic reactions on the tRNA convert PreQ1 to queuine (Q), resulting in the hypermodified nucleoside queuosine (7-(((4,5-cis-dihydroxy-2-cyclopenten-1-yl)amino)methyl)-7-deazaguanosine). In Edwardsiella ictaluri (strain 93-146), this protein is Queuine tRNA-ribosyltransferase.